Here is a 190-residue protein sequence, read N- to C-terminus: NADH dehydrogenase [ubiquinone] iron-sulfur protein 3 (190 aa).

The protein belongs to the complex I 30 kDa subunit family. In terms of assembly, complex I is composed of about 45 different subunits. This is a component of the iron-sulfur (IP) fragment of the enzyme.

Its subcellular location is the mitochondrion inner membrane. It carries out the reaction a ubiquinone + NADH + 5 H(+)(in) = a ubiquinol + NAD(+) + 4 H(+)(out). In terms of biological role, core subunit of the mitochondrial membrane respiratory chain NADH dehydrogenase (Complex I) that is believed to belong to the minimal assembly required for catalysis. Complex I functions in the transfer of electrons from NADH to the respiratory chain. The immediate electron acceptor for the enzyme is believed to be ubiquinone. This chain is NADH dehydrogenase [ubiquinone] iron-sulfur protein 3 (NAD9), found in Oryza sativa subsp. japonica (Rice).